The primary structure comprises 311 residues: ADP-L-glycero-D-manno-heptose-6-epimerase (311 aa).

NADP(+) is bound by residues phenylalanine 10–isoleucine 11, aspartate 31–aspartate 32, lysine 38, lysine 53, glutamate 75–serine 79, and asparagine 92. Catalysis depends on tyrosine 139, which acts as the Proton acceptor. Residue lysine 143 coordinates NADP(+). Asparagine 174 is a substrate binding site. The NADP(+) site is built by valine 175 and lysine 183. The active-site Proton acceptor is lysine 183. Residues serine 185, histidine 192, phenylalanine 206–glutamate 209, arginine 212, and tyrosine 275 each bind substrate.

It belongs to the NAD(P)-dependent epimerase/dehydratase family. HldD subfamily. Homopentamer. Requires NADP(+) as cofactor.

The enzyme catalyses ADP-D-glycero-beta-D-manno-heptose = ADP-L-glycero-beta-D-manno-heptose. It participates in nucleotide-sugar biosynthesis; ADP-L-glycero-beta-D-manno-heptose biosynthesis; ADP-L-glycero-beta-D-manno-heptose from D-glycero-beta-D-manno-heptose 7-phosphate: step 4/4. In terms of biological role, catalyzes the interconversion between ADP-D-glycero-beta-D-manno-heptose and ADP-L-glycero-beta-D-manno-heptose via an epimerization at carbon 6 of the heptose. This Psychromonas ingrahamii (strain DSM 17664 / CCUG 51855 / 37) protein is ADP-L-glycero-D-manno-heptose-6-epimerase.